The primary structure comprises 276 residues: MSIDSLPPLREVIERHDLMPKKSLGQNFLFDLNLTSKIARQAGDLRDQPVIEVGPGPGGLTRALLAQGAYVTAIERDDRCLEALAEIAAHYPGRLRIIAGDALEQDFTALFPEGPKPRIVANLPYNVGTQLLLNWLLVEPWPPFYSSMTLMFQREVAERIVAKLDSDHYGRLGVLAGWRTQAKIAFDVPPQAFTPPPKVMSSVVHIVPRETPLPCRAEALGQITQAAFGQRRKMLRQSLKSIGGAALLEKTGIDGTRRAETLSVEEFVALANACLP.

Residues Asn27, Leu29, Gly54, Glu75, Asp101, and Asn122 each coordinate S-adenosyl-L-methionine.

This sequence belongs to the class I-like SAM-binding methyltransferase superfamily. rRNA adenine N(6)-methyltransferase family. RsmA subfamily.

The protein resides in the cytoplasm. The enzyme catalyses adenosine(1518)/adenosine(1519) in 16S rRNA + 4 S-adenosyl-L-methionine = N(6)-dimethyladenosine(1518)/N(6)-dimethyladenosine(1519) in 16S rRNA + 4 S-adenosyl-L-homocysteine + 4 H(+). Its function is as follows. Specifically dimethylates two adjacent adenosines (A1518 and A1519) in the loop of a conserved hairpin near the 3'-end of 16S rRNA in the 30S particle. May play a critical role in biogenesis of 30S subunits. The sequence is that of Ribosomal RNA small subunit methyltransferase A from Brucella melitensis biotype 1 (strain ATCC 23456 / CCUG 17765 / NCTC 10094 / 16M).